The following is a 442-amino-acid chain: Large ribosomal subunit protein mL65 (442 aa).

Belongs to the mitochondrion-specific ribosomal protein mL65 family. As to quaternary structure, component of the mitochondrial ribosome small subunit (28S) which comprises a 12S rRNA and about 30 distinct proteins.

It is found in the mitochondrion. The chain is Large ribosomal subunit protein mL65 (Mrps30) from Mus musculus (Mouse).